Here is a 303-residue protein sequence, read N- to C-terminus: Endo-1,3;1,4-beta-D-glucanase (303 aa).

A signal peptide spans 1 to 43; it reads MPSSAQVLLCLAAVLAAAAATTAEAHSQCLDNPPDRSIHGRQL. N-linked (GlcNAc...) asparagine glycosylation is found at N115, N197, and N257.

In terms of processing, glycosylated.

It is found in the secreted. Plays a role in control of plant growth. Mediates specific degradation of cell wall (1,3)(1,4)-beta-D-glucans and is related to auxin-mediated growth and development of cereal coleoptiles. The polypeptide is Endo-1,3;1,4-beta-D-glucanase (Zea mays (Maize)).